A 311-amino-acid chain; its full sequence is Formimidoylglutamase (311 aa).

The Mn(2+) site is built by H130, D155, H157, D159, C242, and D244.

Belongs to the arginase family. The cofactor is Mn(2+).

The enzyme catalyses N-formimidoyl-L-glutamate + H2O = formamide + L-glutamate. The protein operates within amino-acid degradation; L-histidine degradation into L-glutamate; L-glutamate from N-formimidoyl-L-glutamate (hydrolase route): step 1/1. Its function is as follows. Catalyzes the conversion of N-formimidoyl-L-glutamate to L-glutamate and formamide. This chain is Formimidoylglutamase, found in Staphylococcus epidermidis (strain ATCC 35984 / DSM 28319 / BCRC 17069 / CCUG 31568 / BM 3577 / RP62A).